The chain runs to 67 residues: MFTMKKSMLLLFFLGTISLSLCEQERNADEEERRDEEVAKMEEIKRGLLSGILGAGKNIVCGLSGLC.

The first 22 residues, 1 to 22 (MFTMKKSMLLLFFLGTISLSLC), serve as a signal peptide directing secretion. A propeptide spanning residues 23–46 (EQERNADEEERRDEEVAKMEEIKR) is cleaved from the precursor. A disulfide bond links Cys-61 and Cys-67.

As to expression, expressed by the skin glands.

The protein resides in the secreted. In terms of biological role, antimicrobial peptide active at least against the Gram-positive bacterium S.aureus but with otherwise unclear activity spectrum. Lacks hemolytic activity against rabbit or human erythrocytes. The polypeptide is Nigrocin-2GRc (Odorrana grahami (Yunnanfu frog)).